A 184-amino-acid chain; its full sequence is Peptide deformylase (184 aa).

Residues C92 and H134 each coordinate Fe cation. The active site involves E135. A Fe cation-binding site is contributed by H138.

The protein belongs to the polypeptide deformylase family. Requires Fe(2+) as cofactor.

It carries out the reaction N-terminal N-formyl-L-methionyl-[peptide] + H2O = N-terminal L-methionyl-[peptide] + formate. In terms of biological role, removes the formyl group from the N-terminal Met of newly synthesized proteins. Requires at least a dipeptide for an efficient rate of reaction. N-terminal L-methionine is a prerequisite for activity but the enzyme has broad specificity at other positions. The protein is Peptide deformylase of Psychrobacter cryohalolentis (strain ATCC BAA-1226 / DSM 17306 / VKM B-2378 / K5).